A 499-amino-acid chain; its full sequence is Alpha-amylase B (499 aa).

Positions 1–21 (MMVAWWSLFLYGLQVAAPALA) are cleaved as a signal peptide. The cysteines at positions 51 and 59 are disulfide-linked. Substrate contacts are provided by Gln56 and Trp104. Asn142 contacts Ca(2+). Residue His143 coordinates substrate. A disulfide bridge links Cys171 with Cys185. Residues Glu183 and Asp196 each coordinate Ca(2+). N-linked (GlcNAc...) asparagine glycosylation occurs at Asn218. Arg225 serves as a coordination point for substrate. Ca(2+) is bound by residues Asp227, His231, and Glu251. The active-site Nucleophile is Asp227. A substrate-binding site is contributed by 230–231 (KH). Catalysis depends on Glu251, which acts as the Proton donor. Gly255 contributes to the substrate binding site. Cysteines 261 and 304 form a disulfide. The substrate site is built by Asp318 and Arg365. An intrachain disulfide couples Cys461 to Cys496.

This sequence belongs to the glycosyl hydrolase 13 family. Requires Ca(2+) as cofactor.

It carries out the reaction Endohydrolysis of (1-&gt;4)-alpha-D-glucosidic linkages in polysaccharides containing three or more (1-&gt;4)-alpha-linked D-glucose units.. The sequence is that of Alpha-amylase B (amyB) from Aspergillus awamori (Black koji mold).